Here is a 291-residue protein sequence, read N- to C-terminus: Beta-lactamase CTX-M-14 (291 aa).

The first 28 residues, 1-28, serve as a signal peptide directing secretion; the sequence is MVTKRVQRMMFAAAACIPLLLGSAPLYA. Ser-73 acts as the Nucleophile; acyl-ester intermediate in catalysis. 4 residues coordinate a beta-lactam: Lys-76, Ser-133, Glu-169, and Ser-240.

It belongs to the class-A beta-lactamase family. Monomer.

Its subcellular location is the secreted. It carries out the reaction a beta-lactam + H2O = a substituted beta-amino acid. Inhibited by the beta-lactamase-blocking agents clavulanic acid, tazobactam and sulbactam. Its function is as follows. Extended-spectrum beta-lactamase (ESBL) which confers resistance to penicillins, as well as first, second, and third-generation cephalosporins. Has cefotaxime-hydrolyzing activity. The sequence is that of Beta-lactamase CTX-M-14 from Escherichia coli.